We begin with the raw amino-acid sequence, 225 residues long: Uracil-DNA glycosylase 1 (225 aa).

Catalysis depends on aspartate 68, which acts as the Proton acceptor.

The protein belongs to the uracil-DNA glycosylase (UDG) superfamily. UNG family.

Its subcellular location is the cytoplasm. The catalysed reaction is Hydrolyzes single-stranded DNA or mismatched double-stranded DNA and polynucleotides, releasing free uracil.. Its function is as follows. Excises uracil residues from the DNA which can arise as a result of misincorporation of dUMP residues by DNA polymerase or due to deamination of cytosine. This chain is Uracil-DNA glycosylase 1 (ung1), found in Streptomyces coelicolor (strain ATCC BAA-471 / A3(2) / M145).